The chain runs to 197 residues: Recombination protein RecR (197 aa).

Residues 56 to 71 (CRLCNNFSEAEVCEVC) form a C4-type zinc finger. Positions 79–174 (RQLAVVEMPA…KVSRLARGVP (96 aa)) constitute a Toprim domain.

This sequence belongs to the RecR family.

In terms of biological role, may play a role in DNA repair. It seems to be involved in an RecBC-independent recombinational process of DNA repair. It may act with RecF and RecO. This chain is Recombination protein RecR, found in Thiobacillus denitrificans (strain ATCC 25259 / T1).